A 119-amino-acid polypeptide reads, in one-letter code: MAGRGKLIAVIGDEDTVTGFLLGGIGELNKNRHPNFLVVEKDTTINEIEDTFRQFLNRDDIGIILINQYIAEMVRHALDAHQRSIPAVLEIPSKEHPYDAAKDSILRRARGMFTAEDLR.

It belongs to the V-ATPase F subunit family. As to quaternary structure, V-ATPase is a heteromultimeric enzyme made up of two complexes: the ATP-hydrolytic V1 complex and the proton translocation V0 complex. The V1 complex consists of three catalytic AB heterodimers that form a heterohexamer, three peripheral stalks each consisting of EG heterodimers, one central rotor including subunits D and F, and the regulatory subunits C and H. The proton translocation complex V0 consists of the proton transport subunit a, a ring of proteolipid subunits c9c'', rotary subunit d, subunits e and f, and the accessory subunits ATP6AP1/Ac45 and ATP6AP2/PRR. In terms of tissue distribution, expressed in brain (at protein level).

Its subcellular location is the cytoplasmic vesicle. It localises to the secretory vesicle. The protein resides in the synaptic vesicle membrane. It is found in the clathrin-coated vesicle membrane. In terms of biological role, subunit of the V1 complex of vacuolar(H+)-ATPase (V-ATPase), a multisubunit enzyme composed of a peripheral complex (V1) that hydrolyzes ATP and a membrane integral complex (V0) that translocates protons. V-ATPase is responsible for acidifying and maintaining the pH of intracellular compartments and in some cell types, is targeted to the plasma membrane, where it is responsible for acidifying the extracellular environment. This chain is V-type proton ATPase subunit F (ATP6V1F), found in Bos taurus (Bovine).